The chain runs to 294 residues: Acetylglutamate kinase (294 aa).

Substrate-binding positions include 63–64 (GG), R85, and N188.

This sequence belongs to the acetylglutamate kinase family. ArgB subfamily.

It localises to the cytoplasm. The enzyme catalyses N-acetyl-L-glutamate + ATP = N-acetyl-L-glutamyl 5-phosphate + ADP. The protein operates within amino-acid biosynthesis; L-arginine biosynthesis; N(2)-acetyl-L-ornithine from L-glutamate: step 2/4. Its function is as follows. Catalyzes the ATP-dependent phosphorylation of N-acetyl-L-glutamate. The chain is Acetylglutamate kinase from Methanococcus maripaludis (strain C6 / ATCC BAA-1332).